A 122-amino-acid polypeptide reads, in one-letter code: Large ribosomal subunit protein bL12 (122 aa).

Belongs to the bacterial ribosomal protein bL12 family. As to quaternary structure, homodimer. Part of the ribosomal stalk of the 50S ribosomal subunit. Forms a multimeric L10(L12)X complex, where L10 forms an elongated spine to which 2 to 4 L12 dimers bind in a sequential fashion. Binds GTP-bound translation factors.

Its function is as follows. Forms part of the ribosomal stalk which helps the ribosome interact with GTP-bound translation factors. Is thus essential for accurate translation. In Mycoplasma mycoides subsp. mycoides SC (strain CCUG 32753 / NCTC 10114 / PG1), this protein is Large ribosomal subunit protein bL12.